The following is a 367-amino-acid chain: Outer membrane porin C (367 aa).

The first 21 residues, M1–A21, serve as a signal peptide directing secretion. The Periplasmic portion of the chain corresponds to A22–D33. The beta stranded transmembrane segment at L34–H42 threads the bilayer. At Y43–D53 the chain is on the extracellular side. The beta stranded transmembrane segment at Q54 to G63 threads the bilayer. Residues E64 to G73 are Periplasmic-facing. A beta stranded membrane pass occupies residues Y74–N84. Residues S85 to N91 lie on the Extracellular side of the membrane. A beta stranded membrane pass occupies residues S92–L101. At K102–V106 the chain is on the periplasmic side. A beta stranded membrane pass occupies residues G107–Y115. A loop L3; may constrict the pore region spans residues G116–G133. Over G116–F141 the chain is Extracellular. The chain crosses the membrane as a beta stranded span at residues M142 to N154. Residues T155–G163 are Periplasmic-facing. A beta stranded transmembrane segment spans residues L164 to Q171. The Extracellular segment spans residues G172–G200. The chain crosses the membrane as a beta stranded span at residues V201–Y207. Over D208–G211 the chain is Periplasmic. Residues F212 to S219 traverse the membrane as a beta stranded segment. The Extracellular segment spans residues S220 to T241. Residues Y242–Y248 form a beta stranded membrane-spanning segment. Residues D249–N252 lie on the Periplasmic side of the membrane. The chain crosses the membrane as a beta stranded span at residues I253–T260. Residues Q261–G269 are Extracellular-facing. Residues S270–Y286 traverse the membrane as a beta stranded segment. Over Q287 to G291 the chain is Periplasmic. Residues L292–L299 traverse the membrane as a beta stranded segment. The Extracellular segment spans residues Q300–Y318. Residues V319 to Y326 traverse the membrane as a beta stranded segment. The Periplasmic segment spans residues F327–N330. Residues M331 to K338 form a beta stranded membrane-spanning segment. The Extracellular segment spans residues I339–I358. Mg(2+)-binding residues include N340, L342, and T355. A beta stranded transmembrane segment spans residues V359–Q366. Residue F367 is a topological domain, periplasmic.

The protein belongs to the Gram-negative porin family. As to quaternary structure, homotrimer. Forms mixed heterotrimers with OmpF and with PhoE; other mixed heterotrimers are also probable.

It is found in the cell outer membrane. Forms pores that allow passive diffusion of small molecules across the outer membrane. Functionally, (Microbial infection) Supports colicin E5 entry in the absence of its major receptor OmpF. In terms of biological role, (Microbial infection) A mixed OmpC-OmpF heterotrimer is the outer membrane receptor for toxin CdiA-EC536; polymorphisms in extracellular loops 4 and 5 of OmpC confer susceptibility to CdiA-EC536-mediated toxicity. The protein is Outer membrane porin C (ompC) of Escherichia coli (strain K12).